A 216-amino-acid chain; its full sequence is FGFR1 oncogene partner 2 homolog (216 aa).

Coiled coils occupy residues 33–102 (TTTL…LIMS) and 131–185 (SKEL…ITRA). Residues 193-216 (EDAAESSSHSASSVPNTDLSLRKS) are disordered. Over residues 206 to 216 (VPNTDLSLRKS) the composition is skewed to polar residues.

Belongs to the SIKE family.

It localises to the cytoplasm. The polypeptide is FGFR1 oncogene partner 2 homolog (fgfr1op2) (Xenopus tropicalis (Western clawed frog)).